Here is a 122-residue protein sequence, read N- to C-terminus: MPTIKQLIRNTRQPIRNVTKSPALRGCPQRRGTCTRVYTITPKKPNSALRKVARVRLTSGFEITAYIPGIGHNSQEHSVVLVRGGRVKDLPGVRYHIVRGTLDAVGVKDRQQGRSYGVKKPK.

Belongs to the universal ribosomal protein uS12 family. In terms of assembly, part of the 30S ribosomal subunit.

The protein resides in the plastid. Its subcellular location is the chloroplast. With S4 and S5 plays an important role in translational accuracy. Located at the interface of the 30S and 50S subunits. This Chloranthus spicatus (Chulantree) protein is Small ribosomal subunit protein uS12c (rps12).